The sequence spans 318 residues: D-alanine--D-alanine ligase B (318 aa).

Positions 116-311 constitute an ATP-grasp domain; sequence KQVWQSLGIP…FQQLVLAILA (196 aa). An ATP-binding site is contributed by 142–197; sequence STELGFPLIVKPAHEGSSIGMAKVNSTQELVAAWQDAAKYDSQVLVEQWIHGPEFT. D265, E278, and N280 together coordinate Mg(2+).

It belongs to the D-alanine--D-alanine ligase family. The cofactor is Mg(2+). Mn(2+) serves as cofactor.

It localises to the cytoplasm. It catalyses the reaction 2 D-alanine + ATP = D-alanyl-D-alanine + ADP + phosphate + H(+). Its pathway is cell wall biogenesis; peptidoglycan biosynthesis. Cell wall formation. This Pseudomonas putida (strain ATCC 47054 / DSM 6125 / CFBP 8728 / NCIMB 11950 / KT2440) protein is D-alanine--D-alanine ligase B.